Here is a 554-residue protein sequence, read N- to C-terminus: DNA gyrase subunit A (554 aa).

Residues 1 to 554 (RGIFRPDRSH…GMATNIPPHN (554 aa)) form the Topo IIA-type catalytic domain. Y69 functions as the O-(5'-phospho-DNA)-tyrosine intermediate in the catalytic mechanism. Positions 195-335 (HLGAFISEGF…IQQMLLEFGV (141 aa)) constitute a DOD-type homing endonuclease domain.

The protein belongs to the type II topoisomerase GyrA/ParC subunit family. Heterotetramer, composed of two GyrA and two GyrB chains. In the heterotetramer, GyrA contains the active site tyrosine that forms a transient covalent intermediate with DNA, while GyrB binds cofactors and catalyzes ATP hydrolysis. This protein undergoes a protein self splicing that involves a post-translational excision of the intervening region (intein) followed by peptide ligation.

Its subcellular location is the cytoplasm. The enzyme catalyses ATP-dependent breakage, passage and rejoining of double-stranded DNA.. In terms of biological role, a type II topoisomerase that negatively supercoils closed circular double-stranded (ds) DNA in an ATP-dependent manner to modulate DNA topology and maintain chromosomes in an underwound state. Negative supercoiling favors strand separation, and DNA replication, transcription, recombination and repair, all of which involve strand separation. Also able to catalyze the interconversion of other topological isomers of dsDNA rings, including catenanes and knotted rings. Type II topoisomerases break and join 2 DNA strands simultaneously in an ATP-dependent manner. This chain is DNA gyrase subunit A (gyrA), found in Mycolicibacterium flavescens (Mycobacterium flavescens).